A 197-amino-acid polypeptide reads, in one-letter code: Double homeobox protein 5 (197 aa).

2 DNA-binding regions (homeobox) span residues 46–105 (GRRM…LRQH) and 121–180 (GRRK…RGQS). The tract at residues 101 to 127 (QLRQHRRQSRPWPGRRDPQKGRRKRTA) is disordered.

It belongs to the paired homeobox family. As to expression, expressed in hepatoma Hep3B cells.

Its subcellular location is the nucleus. In Homo sapiens (Human), this protein is Double homeobox protein 5 (DUX5).